The sequence spans 551 residues: Cilia- and flagella-associated protein 45 (551 aa).

Disordered regions lie at residues 1–52 (MPLR…KSDS), 232–256 (MEID…ERVR), and 385–415 (EQDA…KKIE). Residues 8 to 18 (ASSSASTASNR) show a composition bias toward low complexity. The stretch at 276–524 (AEHREQEKEQ…EDIKKQKLEE (249 aa)) forms a coiled coil. Positions 387–415 (DALRAKRNQEVADREWRRKEKENAQKKIE) are enriched in basic and acidic residues.

This sequence belongs to the CFAP45 family. As to quaternary structure, microtubule inner protein component of sperm flagellar doublet microtubules. Interacts with AK8; dimerization with AK8 may create a cavity at the interface of the dimer that can accommodate AMP. Interacts with CFAP52. Interacts with ENKUR. Directly interacts with DNALI1. Interacts with DNAH11. Interacts with DNAI1. As to expression, expressed in respiratory cells and in sperm (at protein level).

Its subcellular location is the cytoplasm. It is found in the cytoskeleton. The protein resides in the cilium axoneme. It localises to the flagellum axoneme. The protein localises to the cell projection. Its subcellular location is the cilium. It is found in the flagellum. Its function is as follows. Microtubule inner protein (MIP) part of the dynein-decorated doublet microtubules (DMTs) in cilia axoneme, which is required for motile cilia beating. It is an AMP-binding protein that may facilitate dynein ATPase-dependent ciliary and flagellar beating via adenine nucleotide homeostasis. May function as a donor of AMP to AK8 and hence promote ADP production. The protein is Cilia- and flagella-associated protein 45 (Cfap45) of Mus musculus (Mouse).